We begin with the raw amino-acid sequence, 305 residues long: Sulfate adenylyltransferase subunit 2 (305 aa).

Belongs to the PAPS reductase family. CysD subfamily. In terms of assembly, heterodimer composed of CysD, the smaller subunit, and CysN.

It carries out the reaction sulfate + ATP + H(+) = adenosine 5'-phosphosulfate + diphosphate. The protein operates within sulfur metabolism; hydrogen sulfide biosynthesis; sulfite from sulfate: step 1/3. Its function is as follows. With CysN forms the ATP sulfurylase (ATPS) that catalyzes the adenylation of sulfate producing adenosine 5'-phosphosulfate (APS) and diphosphate, the first enzymatic step in sulfur assimilation pathway. APS synthesis involves the formation of a high-energy phosphoric-sulfuric acid anhydride bond driven by GTP hydrolysis by CysN coupled to ATP hydrolysis by CysD. In Myxococcus xanthus (strain DK1622), this protein is Sulfate adenylyltransferase subunit 2.